The chain runs to 379 residues: Omega-3 fatty acid desaturase, endoplasmic reticulum (379 aa).

Residues 52–72 (LSYVVRDVIFVATLIGIAIHL) form a helical membrane-spanning segment. The Histidine box-1 signature appears at 97-101 (HDCGH). Residues 133–137 (HKTHH) carry the Histidine box-2 motif. Helical transmembrane passes span 213–233 (TLCW…FGSL) and 236–256 (FKIY…VTYL). The Histidine box-3 motif lies at 300-304 (HVIHH).

It belongs to the fatty acid desaturase type 1 family.

It localises to the endoplasmic reticulum membrane. It participates in lipid metabolism; polyunsaturated fatty acid biosynthesis. Functionally, ER (microsomal) omega-3 fatty acid desaturase introduces the third double bond in the biosynthesis of 18:3 fatty acids, important constituents of plant membranes. It is thought to use cytochrome b5 as an electron donor and to act on fatty acids esterified to phosphatidylcholine and, possibly, other phospholipids. The polypeptide is Omega-3 fatty acid desaturase, endoplasmic reticulum (FAD3) (Nicotiana tabacum (Common tobacco)).